The chain runs to 409 residues: MARAKFERTKPHVNIGTIGHVDHGKTTLTAAITMTLAAAGSAKARKYEDIDAAPEEKARGITINTAHVEYETPNRHYAHVDCPGHADYVKNMITGAAQMDGAILVVSAADGPMPQTREHILLAKQVGVPSLVVFLNKKDQVDDEELLELVELEVRELLSEYDFPGDDIPIISGSALMAVNALIDNPNIKPGENEWTDQVLELMKAVDDNIPEPEREIDKPFLMAVEDVFSISGRGTVATGRIERGKVKVGETIEIVGIRDTRSTTVTGVEMFQKTLDEGMAGDNVGLLLRGIKKEDIERGMVIAKPGSITPHTQFEGEVYVLTKEEGGRHTPFFKNYRPQFYVRTTDVTGTIQDYTADDGSAVEMVMPGDRIKMTVELISPIAIEQGMRFAIREGGRTIGAGVVSKILK.

The tr-type G domain maps to 10–214 (KPHVNIGTIG…AVDDNIPEPE (205 aa)). Residues 19-26 (GHVDHGKT) form a G1 region. 19-26 (GHVDHGKT) is a GTP binding site. Position 26 (Thr-26) interacts with Mg(2+). Residues 60–64 (GITIN) form a G2 region. Positions 81 to 84 (DCPG) are G3. GTP-binding positions include 81-85 (DCPGH) and 136-139 (NKKD). Residues 136 to 139 (NKKD) are G4. A G5 region spans residues 174-176 (SAL).

It belongs to the TRAFAC class translation factor GTPase superfamily. Classic translation factor GTPase family. EF-Tu/EF-1A subfamily. Monomer.

Its subcellular location is the cytoplasm. The enzyme catalyses GTP + H2O = GDP + phosphate + H(+). In terms of biological role, GTP hydrolase that promotes the GTP-dependent binding of aminoacyl-tRNA to the A-site of ribosomes during protein biosynthesis. The sequence is that of Elongation factor Tu from Crocosphaera subtropica (strain ATCC 51142 / BH68) (Cyanothece sp. (strain ATCC 51142)).